The sequence spans 273 residues: Type II pantothenate kinase (273 aa).

8 to 15 (DAGGTLTK) is a binding site for ATP. E76 acts as the Proton acceptor in catalysis. Residues T105, 127 to 131 (GGTIM), F143, and S230 each bind ATP.

The protein belongs to the type II pantothenate kinase family. As to quaternary structure, homodimer.

It localises to the cytoplasm. It carries out the reaction (R)-pantothenate + ATP = (R)-4'-phosphopantothenate + ADP + H(+). It participates in cofactor biosynthesis; coenzyme A biosynthesis; CoA from (R)-pantothenate: step 1/5. In terms of biological role, catalyzes the phosphorylation of pantothenate (Pan), the first step in CoA biosynthesis. In Bacillus cereus (strain ATCC 14579 / DSM 31 / CCUG 7414 / JCM 2152 / NBRC 15305 / NCIMB 9373 / NCTC 2599 / NRRL B-3711), this protein is Type II pantothenate kinase.